We begin with the raw amino-acid sequence, 82 residues long: Small ribosomal subunit protein uS17 (82 aa).

The protein belongs to the universal ribosomal protein uS17 family. Part of the 30S ribosomal subunit.

In terms of biological role, one of the primary rRNA binding proteins, it binds specifically to the 5'-end of 16S ribosomal RNA. This chain is Small ribosomal subunit protein uS17, found in Nitrobacter hamburgensis (strain DSM 10229 / NCIMB 13809 / X14).